Here is a 157-residue protein sequence, read N- to C-terminus: MKCLLIATGQHVPTWVAQGFAEYHRRLSYWLPLELVEIEPSMRGKNHDPQRAIEDEGRRVMAALPKQPYAVTLDVKGKPLNSEQLAQRMEHWRGLGRNLVFLIGGPEGHSQEVLNISNERWSLGPLTLPHMLVRLIVVEQLYRAATILTNHPYHRGK.

S-adenosyl-L-methionine-binding positions include L73, G104, and 123–128 (LGPLTL).

It belongs to the RNA methyltransferase RlmH family. As to quaternary structure, homodimer.

It is found in the cytoplasm. The enzyme catalyses pseudouridine(1915) in 23S rRNA + S-adenosyl-L-methionine = N(3)-methylpseudouridine(1915) in 23S rRNA + S-adenosyl-L-homocysteine + H(+). Specifically methylates the pseudouridine at position 1915 (m3Psi1915) in 23S rRNA. In Xylella fastidiosa (strain M23), this protein is Ribosomal RNA large subunit methyltransferase H.